The primary structure comprises 146 residues: MVDELVLLLHALLMRHRALSIENSQLMEQLRLLVCERASLLRQVRPPSCPVPFPETFNGESSRLPEFIVQTASYMLVNENRFCNDAMKVAFLISLLTGEAEEWVVPYIEMDSPILGDYRAFLDEMKQCFGWDDDEDDDDEEEEDDY.

Belongs to the LDOC1 family. As to quaternary structure, interacts with NOD2. As to expression, ubiquitously expressed with high levels in brain ant thyroid and low expression in placenta, liver and leukocytes. Expressed as well in six of the seven human breast cancer cell lines examined.

Its subcellular location is the nucleus. In terms of biological role, may have an important role in the development and/or progression of some cancers. This Homo sapiens (Human) protein is Protein LDOC1 (LDOC1).